Reading from the N-terminus, the 678-residue chain is Vacuolar fusion protein mon1 (678 aa).

3 disordered regions span residues 1 to 116 (MDRD…YTSP), 449 to 474 (EENN…VTSP), and 568 to 591 (FETS…KTTE). Positions 10-20 (NDGTNDNNDTT) are enriched in low complexity. Polar residues predominate over residues 63-77 (RPTTQVSTIDISTLS). Over residues 87–105 (STSATSATSATSATRSVAS) the composition is skewed to low complexity. Residues 106–116 (PQSSASGYTSP) show a composition bias toward polar residues. Over residues 450–459 (ENNSNNTNNP) the composition is skewed to low complexity. Residues 460–471 (EQPPQPPPPKPV) are compositionally biased toward pro residues.

Belongs to the MON1/SAND family.

It localises to the endosome. Its subcellular location is the multivesicular body membrane. It is found in the prevacuolar compartment membrane. The protein resides in the vacuole membrane. Functionally, in complex with CCZ1, is required for multiple vacuole delivery pathways including the cytoplasm to vacuole transport (Cvt), autophagy, pexophagy and endocytosis. The MON1-CCZ1 complex acts at the fusion of vesicles with the vacuole, through its regulation of the SNARE complex during the coordinated priming and docking stages of fusion, and particularly at the stage of tethering/docking. The sequence is that of Vacuolar fusion protein mon1 (apg-13) from Neurospora crassa (strain ATCC 24698 / 74-OR23-1A / CBS 708.71 / DSM 1257 / FGSC 987).